The primary structure comprises 140 residues: Cystatin-C (140 aa).

The first 20 residues, 1–20 (MASPLRSLLFLLAVLAVAWA), serve as a signal peptide directing secretion. Residues 75 to 79 (QLVAG) carry the Secondary area of contact motif. Intrachain disulfides connect cysteine 93–cysteine 103 and cysteine 117–cysteine 137.

This sequence belongs to the cystatin family.

It localises to the secreted. Its function is as follows. As an inhibitor of cysteine proteinases, this protein is thought to serve an important physiological role as a local regulator of this enzyme activity. The sequence is that of Cystatin-C (Cst3) from Mus musculus (Mouse).